The chain runs to 311 residues: Mediator of RNA polymerase II transcription subunit 27-A (311 aa).

This sequence belongs to the Mediator complex subunit 27 family. Component of the Mediator complex.

It localises to the nucleus. Functionally, component of the Mediator complex, a coactivator involved in the regulated transcription of nearly all RNA polymerase II-dependent genes. Mediator functions as a bridge to convey information from gene-specific regulatory proteins to the basal RNA polymerase II transcription machinery. Mediator is recruited to promoters by direct interactions with regulatory proteins and serves as a scaffold for the assembly of a functional preinitiation complex with RNA polymerase II and the general transcription factors. The polypeptide is Mediator of RNA polymerase II transcription subunit 27-A (med27-a) (Xenopus laevis (African clawed frog)).